Here is a 1402-residue protein sequence, read N- to C-terminus: Transcription factor SPT20 homolog (1402 aa).

Disordered stretches follow at residues 1-29 (MNGNSKVHTEENKNEHQQEGKGGEQEQEQ), 60-107 (VNSL…LDTD), 114-133 (NNDSSNNTTTTTIPRQSSSS), 177-206 (QTTLPTNNNNNNNNNNNNNNNNNNNNNNIL), 786-817 (APSTSTSSSSSSGGTTTTTTATGTTPTTPTPV), 1136-1174 (PQQIQTQPLQQPPNQMAQSMISPQSTPSTSPSPQQQYQT), and 1199-1250 (QPLQ…PPQI). Basic and acidic residues predominate over residues 7 to 29 (VHTEENKNEHQQEGKGGEQEQEQ). A compositionally biased stretch (polar residues) spans 60–72 (VNSLSEPTPNEQQ). The span at 73–102 (NNNNNNNSNGNGNGNDETTSSKTTTIINSN) shows a compositional bias: low complexity. 6 stretches are compositionally biased toward low complexity: residues 183 to 204 (NNNNNNNNNNNNNNNNNNNNNN), 786 to 812 (APSTSTSSSSSSGGTTTTTTATGTTPT), 1136 to 1150 (PQQIQTQPLQQPPNQ), 1157 to 1174 (SPQSTPSTSPSPQQQYQT), 1199 to 1218 (QPLQQPQPQPQQQQQQQQQQ), and 1226 to 1250 (PQQFAQHLQQQQMQRPQAQLQPPQI).

This sequence belongs to the SPT20 family.

The sequence is that of Transcription factor SPT20 homolog from Dictyostelium discoideum (Social amoeba).